A 127-amino-acid chain; its full sequence is Aspartate 1-decarboxylase (127 aa).

The active-site Schiff-base intermediate with substrate; via pyruvic acid is Ser-25. Position 25 is a pyruvic acid (Ser) (Ser-25). Thr-57 lines the substrate pocket. The Proton donor role is filled by Tyr-58. 73–75 (GAA) is a binding site for substrate.

Belongs to the PanD family. As to quaternary structure, heterooctamer of four alpha and four beta subunits. Pyruvate is required as a cofactor. In terms of processing, is synthesized initially as an inactive proenzyme, which is activated by self-cleavage at a specific serine bond to produce a beta-subunit with a hydroxyl group at its C-terminus and an alpha-subunit with a pyruvoyl group at its N-terminus.

It localises to the cytoplasm. The catalysed reaction is L-aspartate + H(+) = beta-alanine + CO2. It participates in cofactor biosynthesis; (R)-pantothenate biosynthesis; beta-alanine from L-aspartate: step 1/1. Catalyzes the pyruvoyl-dependent decarboxylation of aspartate to produce beta-alanine. The polypeptide is Aspartate 1-decarboxylase (Bacillus cereus (strain B4264)).